An 893-amino-acid polypeptide reads, in one-letter code: DNA mismatch repair protein MutS (893 aa).

631 to 638 (GPNMAGKS) contributes to the ATP binding site. Residues 821–858 (AGRPRVAVRQPQGGRRGASTGQLGLFGMEPAQGGTGVT) are disordered.

Belongs to the DNA mismatch repair MutS family.

In terms of biological role, this protein is involved in the repair of mismatches in DNA. It is possible that it carries out the mismatch recognition step. This protein has a weak ATPase activity. The protein is DNA mismatch repair protein MutS of Myxococcus xanthus (strain DK1622).